A 196-amino-acid chain; its full sequence is Putative NADH dehydrogenase/NAD(P)H nitroreductase XCV0587 (196 aa).

This sequence belongs to the nitroreductase family. HadB/RutE subfamily. Requires FMN as cofactor.

This chain is Putative NADH dehydrogenase/NAD(P)H nitroreductase XCV0587, found in Xanthomonas euvesicatoria pv. vesicatoria (strain 85-10) (Xanthomonas campestris pv. vesicatoria).